Here is a 270-residue protein sequence, read N- to C-terminus: SPbeta prophage-derived DNA ligase-like protein LigB (270 aa).

Lysine 25 serves as the catalytic N6-AMP-lysine intermediate.

The protein belongs to the ATP-dependent DNA ligase family.

The chain is SPbeta prophage-derived DNA ligase-like protein LigB (ligB) from Bacillus subtilis (strain 168).